The following is a 130-amino-acid chain: MFMLQIADYIAENYRGKVVEVGIGRFTAVAELLARRGFEVFATDVVERRAPEGCRFYVDDVTKPNLKIYEGASLIYSLRPPPELFSAIVEVSRKVGADCLIKPLYGDYMEARIVNYKGAQFYLIRRENYD.

Belongs to the UPF0146 family.

The polypeptide is UPF0146 protein AF_0739.1 (Archaeoglobus fulgidus (strain ATCC 49558 / DSM 4304 / JCM 9628 / NBRC 100126 / VC-16)).